A 429-amino-acid polypeptide reads, in one-letter code: UDP-N-acetylglucosamine 1-carboxyvinyltransferase 2 (429 aa).

22 to 23 (KN) serves as a coordination point for phosphoenolpyruvate. Arg93 contributes to the UDP-N-acetyl-alpha-D-glucosamine binding site. Cys117 functions as the Proton donor in the catalytic mechanism. Cys117 is modified (2-(S-cysteinyl)pyruvic acid O-phosphothioketal). UDP-N-acetyl-alpha-D-glucosamine contacts are provided by residues 122 to 126 (RPIDQ), Asp305, and Ile327.

This sequence belongs to the EPSP synthase family. MurA subfamily.

It localises to the cytoplasm. The catalysed reaction is phosphoenolpyruvate + UDP-N-acetyl-alpha-D-glucosamine = UDP-N-acetyl-3-O-(1-carboxyvinyl)-alpha-D-glucosamine + phosphate. Its pathway is cell wall biogenesis; peptidoglycan biosynthesis. Functionally, cell wall formation. Adds enolpyruvyl to UDP-N-acetylglucosamine. The polypeptide is UDP-N-acetylglucosamine 1-carboxyvinyltransferase 2 (Bacillus anthracis).